Here is a 323-residue protein sequence, read N- to C-terminus: Trihelix transcription factor GT-3a (323 aa).

The segment covering Met1–Leu20 has biased composition (basic residues). Residues Met1 to Gln51 are disordered. One can recognise a Myb-like domain in the interval Trp52–Val108. Disordered stretches follow at residues Glu147–Gln176, Lys190–Ala220, and Glu269–Gln297. Acidic residues predominate over residues Ser164–Gln176.

In terms of assembly, homodimer. Heterodimer with GT-3B. Predominantly expressed in roots and flower buds.

Its subcellular location is the nucleus. Probable transcription factor that binds specifically to the core DNA sequence 5'-GTTAC-3'. The protein is Trihelix transcription factor GT-3a (GT-3A) of Arabidopsis thaliana (Mouse-ear cress).